The following is a 348-amino-acid chain: Glycerol-1-phosphate dehydrogenase [NAD(P)+] (348 aa).

NAD(+)-binding positions include 94–98 and 116–119; these read GKVID and TTAS. Residue Asp121 coordinates substrate. Residue Ser125 coordinates NAD(+). Substrate is bound at residue Asp168. Zn(2+) contacts are provided by Asp168 and His248. Residue His252 coordinates substrate. His264 is a binding site for Zn(2+).

The protein belongs to the glycerol-1-phosphate dehydrogenase family. In terms of assembly, homooctamer. Zn(2+) serves as cofactor.

The protein resides in the cytoplasm. The catalysed reaction is sn-glycerol 1-phosphate + NAD(+) = dihydroxyacetone phosphate + NADH + H(+). It carries out the reaction sn-glycerol 1-phosphate + NADP(+) = dihydroxyacetone phosphate + NADPH + H(+). It functions in the pathway membrane lipid metabolism; glycerophospholipid metabolism. Its function is as follows. Catalyzes the NAD(P)H-dependent reduction of dihydroxyacetonephosphate (DHAP or glycerone phosphate) to glycerol 1-phosphate (G1P). The G1P thus generated is used as the glycerophosphate backbone of phospholipids in the cellular membranes of Archaea. This Methanobrevibacter smithii (strain ATCC 35061 / DSM 861 / OCM 144 / PS) protein is Glycerol-1-phosphate dehydrogenase [NAD(P)+].